We begin with the raw amino-acid sequence, 525 residues long: MGDPSKQDILAIFKRLRSVPTNKVCFDCGAKNPSWASISYGVFLCIDCSGSHRSLGVHLSFIRSTELDSNWSWFQLRCMQVGGNANASSFFHQHGCATKDTNAKYNSRAAQLYREKIKTLATQATRRHGTDLWLDSCAAPPASPPPKEEDFFASHASLEVSGATQASAQPEPASSTPWGLETTPEKHEGGPGQGPSVEGLNTPGKTAPAEVSSIIKKKPNQAKKGLGAKKGSLGAQKLTNTSFTEIEKQAQAVDKRKEQEDLARGTPKEESIVSSLRLAYKDLEIHKKQDERLNLSGQKKAEAERLGMGFGSCRGGISHSVTSDMQTIEQESPTLAKPRRKYQEDPEDSYFSSSSKWSEQSSSRYFDDPMELRSSHFSSWDDSADSYWKKDSSRDPEPATKSTGSSDRPSSRRKPEYEPVGNTDEAQKKFGNVKAISSDMYFGIQSQTDFETRARLERLSTSSSISSADLFDEQRKQTTGNYNLSNVLPNAPDMAQFKQGVRSVAGKLSVFANGVMTSIQDRYGS.

Positions 10 to 126 (LAIFKRLRSV…IKTLATQATR (117 aa)) constitute an Arf-GAP domain. Residues 25 to 48 (CFDCGAKNPSWASISYGVFLCIDC) form a C4-type zinc finger. The tract at residues 160–233 (VSGATQASAQ…KGLGAKKGSL (74 aa)) is disordered. A compositionally biased stretch (polar residues) spans 162-177 (GATQASAQPEPASSTP). Positions 222 to 233 (AKKGLGAKKGSL) are enriched in low complexity. A phosphoserine mark is found at Ser232, Ser242, Ser271, and Ser275. The segment at 249-271 (QAQAVDKRKEQEDLARGTPKEES) is disordered. Positions 293 to 305 (LNLSGQKKAEAER) are enriched in basic and acidic residues. Disordered stretches follow at residues 293 to 364 (LNLS…SSSR) and 377 to 428 (FSSW…EAQK). Over residues 319–333 (HSVTSDMQTIEQESP) the composition is skewed to polar residues. A Phosphoserine modification is found at Ser332. Positions 349-363 (SYFSSSSKWSEQSSS) are enriched in low complexity. A Phosphoserine modification is found at Ser379. A compositionally biased stretch (basic and acidic residues) spans 387–398 (YWKKDSSRDPEP). Ser437, Ser460, Ser462, Ser464, Ser466, and Ser467 each carry phosphoserine.

It is found in the cytoplasm. It localises to the golgi apparatus membrane. Its activity is regulated as follows. GAP activity stimulated by phosphatidylinositol 4,5-bisphosphate (PIP2). Its function is as follows. GTPase-activating protein (GAP) for ADP ribosylation factor 1 (ARF1). Hydrolysis of ARF1-bound GTP may lead to dissociation of coatomer from Golgi-derived membranes to allow fusion with target membranes. This chain is ADP-ribosylation factor GTPase-activating protein 3, found in Rattus norvegicus (Rat).